The primary structure comprises 91 residues: C-C motif chemokine 5 (91 aa).

Positions 1–23 are cleaved as a signal peptide; it reads MKVSAARLAVILVATALCAPASA. 2 disulfide bridges follow: C33–C57 and C34–C73.

Belongs to the intercrine beta (chemokine CC) family.

It is found in the secreted. Its function is as follows. Chemoattractant for blood monocytes, memory T-helper cells and eosinophils. Causes the release of histamine from basophils and activates eosinophils. May activate several chemokine receptors including CCR1, CCR3, CCR4 and CCR5. May also be an agonist of the G protein-coupled receptor GPR75. Together with GPR75, may play a role in neuron survival through activation of a downstream signaling pathway involving the PI3, Akt and MAP kinases. By activating GPR75 may also play a role in insulin secretion by islet cells. This is C-C motif chemokine 5 (CCL5) from Macaca mulatta (Rhesus macaque).